A 247-amino-acid chain; its full sequence is ATP synthase subunit a, chloroplastic (247 aa).

Helical transmembrane passes span 38–58, 95–115, 134–154, 199–219, and 220–240; these read QVLITSWVVIAILLGSATLAV, VPFIGTMFLFIFVSNWSGALL, INTTVALALLTSVAYFYAGLT, LVVVVLVSLVPSVVPIPVMFL, and GLFTSGIQALIFATLAAAYIG.

This sequence belongs to the ATPase A chain family. In terms of assembly, F-type ATPases have 2 components, CF(1) - the catalytic core - and CF(0) - the membrane proton channel. CF(1) has five subunits: alpha(3), beta(3), gamma(1), delta(1), epsilon(1). CF(0) has four main subunits: a, b, b' and c.

Its subcellular location is the plastid. The protein resides in the chloroplast thylakoid membrane. Its function is as follows. Key component of the proton channel; it plays a direct role in the translocation of protons across the membrane. In Guizotia abyssinica (Niger), this protein is ATP synthase subunit a, chloroplastic.